The sequence spans 89 residues: Small ribosomal subunit protein uS15 (89 aa).

Belongs to the universal ribosomal protein uS15 family. Part of the 30S ribosomal subunit. Forms a bridge to the 50S subunit in the 70S ribosome, contacting the 23S rRNA.

In terms of biological role, one of the primary rRNA binding proteins, it binds directly to 16S rRNA where it helps nucleate assembly of the platform of the 30S subunit by binding and bridging several RNA helices of the 16S rRNA. Its function is as follows. Forms an intersubunit bridge (bridge B4) with the 23S rRNA of the 50S subunit in the ribosome. The sequence is that of Small ribosomal subunit protein uS15 from Thermodesulfovibrio yellowstonii (strain ATCC 51303 / DSM 11347 / YP87).